Here is a 132-residue protein sequence, read N- to C-terminus: Large ribosomal subunit protein bL17 (132 aa).

Belongs to the bacterial ribosomal protein bL17 family. Part of the 50S ribosomal subunit. Contacts protein L32.

This Saccharophagus degradans (strain 2-40 / ATCC 43961 / DSM 17024) protein is Large ribosomal subunit protein bL17.